Consider the following 264-residue polypeptide: Thymidylate synthase (264 aa).

Arg-21 is a dUMP binding site. His-51 is a binding site for (6R)-5,10-methylene-5,6,7,8-tetrahydrofolate. 126–127 serves as a coordination point for dUMP; it reads RR. Residue Cys-146 is the Nucleophile of the active site. DUMP is bound by residues 166 to 169, Asn-177, and 207 to 209; these read RSCD and HLY. Residue Asp-169 coordinates (6R)-5,10-methylene-5,6,7,8-tetrahydrofolate. A (6R)-5,10-methylene-5,6,7,8-tetrahydrofolate-binding site is contributed by Ala-263.

The protein belongs to the thymidylate synthase family. Bacterial-type ThyA subfamily. Homodimer.

It is found in the cytoplasm. The catalysed reaction is dUMP + (6R)-5,10-methylene-5,6,7,8-tetrahydrofolate = 7,8-dihydrofolate + dTMP. It functions in the pathway pyrimidine metabolism; dTTP biosynthesis. In terms of biological role, catalyzes the reductive methylation of 2'-deoxyuridine-5'-monophosphate (dUMP) to 2'-deoxythymidine-5'-monophosphate (dTMP) while utilizing 5,10-methylenetetrahydrofolate (mTHF) as the methyl donor and reductant in the reaction, yielding dihydrofolate (DHF) as a by-product. This enzymatic reaction provides an intracellular de novo source of dTMP, an essential precursor for DNA biosynthesis. The chain is Thymidylate synthase from Salmonella paratyphi C (strain RKS4594).